Here is a 360-residue protein sequence, read N- to C-terminus: Meiotic drive suppressor wtf13 (360 aa).

Composition is skewed to polar residues over residues 1-10 and 58-70; these read MKNNYTSLKS and DSST…TNPN. 2 disordered regions span residues 1–20 and 37–75; these read MKNN…ELKT and EEEG…ERRQ. Transmembrane regions (helical) follow at residues 90 to 110, 120 to 140, 150 to 170, 186 to 206, 222 to 242, 246 to 266, 276 to 296, and 310 to 330; these read LLIS…CVNP, AFSV…FCFF, CIKV…ISLA, DLVV…FGCV, SSIS…IWTL, LFGL…TKGL, ATGY…LFFY, and FIGN…RGIA.

The protein belongs to the WTF family. In terms of assembly, homomer. Interacts with other proteins that exhibit high sequence similarity.

It localises to the spore membrane. It is found in the vacuole membrane. Functionally, acts as a suppressor component of the dual wtf meiotic drive system, and can suppress but not confer meiotic drive by compatible poisons. Wtf meiotic drive systems promote unequal transmission of alleles from the parental zygote to progeny spores by encoding a poison and an antidote from the same locus; the poison is trans-acting and forms toxic aggregates in all spores within an ascus, wherease the antidote is spore-specific and targets aggregates for degradation by the vacuole. Meiotic drive by wtf systems therefore lead to poisoning of all progeny that do not inherit the dual poison/antidote allele, or express a compatible antidote. In Schizosaccharomyces kambucha (Fission yeast), this protein is Meiotic drive suppressor wtf13.